Reading from the N-terminus, the 390-residue chain is Homeobox protein Meis1 (390 aa).

Positions 108–191 (GGDVCSSESF…PIDLVIDDRD (84 aa)) constitute an MEIS N-terminal domain. A compositionally biased stretch (basic and acidic residues) spans 188 to 202 (DDRDGGSKSDSEDLT). The segment at 188–279 (DDRDGGSKSD…KKRNKGRGIF (92 aa)) is disordered. The homeobox; TALE-type DNA-binding region spans 272-334 (RNKGRGIFPK…NARRRIVQPM (63 aa)). Residues 299 to 329 (YPSEEQKKQLAQDTGLTILQVNNWFINARRR) form an interaction with DNA region.

This sequence belongs to the TALE/MEIS homeobox family. Interacts with pbx1 isoform b. In the embryo, displays a broad expression pattern with high levels observed in tissues of neural cell fate such as midbrain, hindbrain, dorsal portion of the neural tube, and neural crest-derived branchial arches. Widely expressed in the adult with highest levels in brain and spleen.

It is found in the cytoplasm. It localises to the nucleus. In terms of biological role, induces expression of a number of neural crest marker genes as part of a heterodimer with isoform b of pbx1, to specify neural crest cell fate. Binds to a highly conserved region in the promoter of the neural crest marker gene zic3. This is Homeobox protein Meis1 (meis1) from Xenopus laevis (African clawed frog).